The sequence spans 438 residues: Xylose isomerase (438 aa).

Active-site residues include histidine 100 and aspartate 103. Positions 231, 267, 270, 295, 306, 308, and 338 each coordinate Mg(2+).

This sequence belongs to the xylose isomerase family. As to quaternary structure, homotetramer. Mg(2+) is required as a cofactor.

The protein resides in the cytoplasm. The catalysed reaction is alpha-D-xylose = alpha-D-xylulofuranose. This chain is Xylose isomerase, found in Thermoanaerobacter sp. (strain X514).